A 261-amino-acid polypeptide reads, in one-letter code: Cytochrome c oxidase subunit 3 (261 aa).

Over 1-15 the chain is Mitochondrial matrix; sequence MTHQTHAYHMVNPSP. A helical transmembrane segment spans residues 16 to 34; that stretch reads WPLTGALSALLMTSGLIMW. Over 35-40 the chain is Mitochondrial intermembrane; the sequence is FHFNST. The chain crosses the membrane as a helical span at residues 41–66; that stretch reads TLLMLGLTTNMLTMYQWWRDIIREST. Residues 67 to 72 are Mitochondrial matrix-facing; the sequence is FQGHHT. Residues 73–105 form a helical membrane-spanning segment; it reads PSVQKGLRYGMILFIISEVLFFTGFFWAFYHSS. Topologically, residues 106-128 are mitochondrial intermembrane; it reads LAPTPELGGCWPPTGIHPLNPLE. A helical transmembrane segment spans residues 129 to 152; sequence VPLLNTSVLLASGVSITWAHHSLM. At 153 to 155 the chain is on the mitochondrial matrix side; sequence EGN. The chain crosses the membrane as a helical span at residues 156 to 183; the sequence is RNHMLQALFITIALGVYFTLLQASEYYE. Residues 184–190 are Mitochondrial intermembrane-facing; sequence APFTISD. Residues 191–223 form a helical membrane-spanning segment; it reads GVYGSTFFVATGFHGLHVIIGSTFLIVCFFRQL. At 224-232 the chain is on the mitochondrial matrix side; that stretch reads KFHFTSNHH. Residues 233 to 256 traverse the membrane as a helical segment; that stretch reads FGFEAAAWYWHFVDVVWLFLYVSI. Over 257 to 261 the chain is Mitochondrial intermembrane; sequence YWWGS.

This sequence belongs to the cytochrome c oxidase subunit 3 family. Component of the cytochrome c oxidase (complex IV, CIV), a multisubunit enzyme composed of 14 subunits. The complex is composed of a catalytic core of 3 subunits MT-CO1, MT-CO2 and MT-CO3, encoded in the mitochondrial DNA, and 11 supernumerary subunits COX4I, COX5A, COX5B, COX6A, COX6B, COX6C, COX7A, COX7B, COX7C, COX8 and NDUFA4, which are encoded in the nuclear genome. The complex exists as a monomer or a dimer and forms supercomplexes (SCs) in the inner mitochondrial membrane with NADH-ubiquinone oxidoreductase (complex I, CI) and ubiquinol-cytochrome c oxidoreductase (cytochrome b-c1 complex, complex III, CIII), resulting in different assemblies (supercomplex SCI(1)III(2)IV(1) and megacomplex MCI(2)III(2)IV(2)).

The protein resides in the mitochondrion inner membrane. It catalyses the reaction 4 Fe(II)-[cytochrome c] + O2 + 8 H(+)(in) = 4 Fe(III)-[cytochrome c] + 2 H2O + 4 H(+)(out). Its function is as follows. Component of the cytochrome c oxidase, the last enzyme in the mitochondrial electron transport chain which drives oxidative phosphorylation. The respiratory chain contains 3 multisubunit complexes succinate dehydrogenase (complex II, CII), ubiquinol-cytochrome c oxidoreductase (cytochrome b-c1 complex, complex III, CIII) and cytochrome c oxidase (complex IV, CIV), that cooperate to transfer electrons derived from NADH and succinate to molecular oxygen, creating an electrochemical gradient over the inner membrane that drives transmembrane transport and the ATP synthase. Cytochrome c oxidase is the component of the respiratory chain that catalyzes the reduction of oxygen to water. Electrons originating from reduced cytochrome c in the intermembrane space (IMS) are transferred via the dinuclear copper A center (CU(A)) of subunit 2 and heme A of subunit 1 to the active site in subunit 1, a binuclear center (BNC) formed by heme A3 and copper B (CU(B)). The BNC reduces molecular oxygen to 2 water molecules using 4 electrons from cytochrome c in the IMS and 4 protons from the mitochondrial matrix. The chain is Cytochrome c oxidase subunit 3 (MT-CO3) from Pelea capreolus (Gray rhebok).